Reading from the N-terminus, the 505-residue chain is ATP synthase subunit beta (505 aa).

157 to 164 is an ATP binding site; the sequence is GGAGVGKT.

This sequence belongs to the ATPase alpha/beta chains family. As to quaternary structure, F-type ATPases have 2 components, CF(1) - the catalytic core - and CF(0) - the membrane proton channel. CF(1) has five subunits: alpha(3), beta(3), gamma(1), delta(1), epsilon(1). CF(0) has three main subunits: a(1), b(2) and c(9-12). The alpha and beta chains form an alternating ring which encloses part of the gamma chain. CF(1) is attached to CF(0) by a central stalk formed by the gamma and epsilon chains, while a peripheral stalk is formed by the delta and b chains.

The protein resides in the cell inner membrane. The catalysed reaction is ATP + H2O + 4 H(+)(in) = ADP + phosphate + 5 H(+)(out). Functionally, produces ATP from ADP in the presence of a proton gradient across the membrane. The catalytic sites are hosted primarily by the beta subunits. The polypeptide is ATP synthase subunit beta (Bacteroides thetaiotaomicron (strain ATCC 29148 / DSM 2079 / JCM 5827 / CCUG 10774 / NCTC 10582 / VPI-5482 / E50)).